The primary structure comprises 343 residues: GTPase Obg (343 aa).

One can recognise an Obg domain in the interval 1–159; it reads MKFLDEAKVY…HWLWLRLKLI (159 aa). One can recognise an OBG-type G domain in the interval 160–327; sequence ADAGLVGLPN…ALRALLAAMD (168 aa). GTP is bound by residues 166-173, 191-195, 212-215, 279-282, and 308-310; these read GLPNAGKS, FTTLH, DIPG, SKAD, and SAA. Ser-173 and Thr-193 together coordinate Mg(2+).

The protein belongs to the TRAFAC class OBG-HflX-like GTPase superfamily. OBG GTPase family. Monomer. The cofactor is Mg(2+).

The protein localises to the cytoplasm. Its function is as follows. An essential GTPase which binds GTP, GDP and possibly (p)ppGpp with moderate affinity, with high nucleotide exchange rates and a fairly low GTP hydrolysis rate. Plays a role in control of the cell cycle, stress response, ribosome biogenesis and in those bacteria that undergo differentiation, in morphogenesis control. The protein is GTPase Obg of Methylobacterium sp. (strain 4-46).